Consider the following 255-residue polypeptide: NAD-dependent protein deacylase (255 aa).

One can recognise a Deacetylase sirtuin-type domain in the interval 1–252 (MPKLVVFSGA…AEIEQELEQF (252 aa)). 9-28 (GAGLSAESGLETFRDNGGLW) serves as a coordination point for NAD(+). Residues tyrosine 53 and arginine 56 each coordinate substrate. Residue 103-106 (QNVD) participates in NAD(+) binding. Histidine 121 acts as the Proton acceptor in catalysis. Residues cysteine 129, cysteine 132, cysteine 148, and cysteine 151 each coordinate Zn(2+). Residues 190–192 (GTS), 218–220 (NLQ), and threonine 238 each bind NAD(+).

Belongs to the sirtuin family. Class III subfamily. Requires Zn(2+) as cofactor.

It localises to the cytoplasm. The enzyme catalyses N(6)-acetyl-L-lysyl-[protein] + NAD(+) + H2O = 2''-O-acetyl-ADP-D-ribose + nicotinamide + L-lysyl-[protein]. It carries out the reaction N(6)-succinyl-L-lysyl-[protein] + NAD(+) + H2O = 2''-O-succinyl-ADP-D-ribose + nicotinamide + L-lysyl-[protein]. In terms of biological role, NAD-dependent lysine deacetylase and desuccinylase that specifically removes acetyl and succinyl groups on target proteins. Modulates the activities of several proteins which are inactive in their acylated form. This Helicobacter hepaticus (strain ATCC 51449 / 3B1) protein is NAD-dependent protein deacylase.